A 131-amino-acid polypeptide reads, in one-letter code: Small ribosomal subunit protein uS8 (131 aa).

The protein belongs to the universal ribosomal protein uS8 family. In terms of assembly, part of the 30S ribosomal subunit. Contacts proteins S5 and S12.

Functionally, one of the primary rRNA binding proteins, it binds directly to 16S rRNA central domain where it helps coordinate assembly of the platform of the 30S subunit. The chain is Small ribosomal subunit protein uS8 from Cupriavidus metallidurans (strain ATCC 43123 / DSM 2839 / NBRC 102507 / CH34) (Ralstonia metallidurans).